Reading from the N-terminus, the 224-residue chain is Uracil-DNA glycosylase (224 aa).

The Proton acceptor role is filled by D65.

The protein belongs to the uracil-DNA glycosylase (UDG) superfamily. UNG family.

It is found in the cytoplasm. It catalyses the reaction Hydrolyzes single-stranded DNA or mismatched double-stranded DNA and polynucleotides, releasing free uracil.. Excises uracil residues from the DNA which can arise as a result of misincorporation of dUMP residues by DNA polymerase or due to deamination of cytosine. In Buchnera aphidicola subsp. Baizongia pistaciae (strain Bp), this protein is Uracil-DNA glycosylase.